The chain runs to 205 residues: Small ribosomal subunit protein uS4 (205 aa).

The tract at residues 20-44 is disordered; that stretch reads WGRPKSPVNRREYGPGQHGQRRKGK. The region spanning 94–154 is the S4 RNA-binding domain; the sequence is SRLDAIVYRS…ERSKQLLLVL (61 aa).

The protein belongs to the universal ribosomal protein uS4 family. Part of the 30S ribosomal subunit. Contacts protein S5. The interaction surface between S4 and S5 is involved in control of translational fidelity.

Its function is as follows. One of the primary rRNA binding proteins, it binds directly to 16S rRNA where it nucleates assembly of the body of the 30S subunit. Functionally, with S5 and S12 plays an important role in translational accuracy. This is Small ribosomal subunit protein uS4 from Bartonella bacilliformis (strain ATCC 35685 / KC583 / Herrer 020/F12,63).